The sequence spans 421 residues: Serine--tRNA ligase (421 aa).

230-232 (TAE) is an L-serine binding site. 259–261 (RRE) contacts ATP. Position 282 (E282) interacts with L-serine. 346–349 (EISS) lines the ATP pocket. S380 is a binding site for L-serine.

It belongs to the class-II aminoacyl-tRNA synthetase family. Type-1 seryl-tRNA synthetase subfamily. In terms of assembly, homodimer. The tRNA molecule binds across the dimer.

Its subcellular location is the cytoplasm. It carries out the reaction tRNA(Ser) + L-serine + ATP = L-seryl-tRNA(Ser) + AMP + diphosphate + H(+). The enzyme catalyses tRNA(Sec) + L-serine + ATP = L-seryl-tRNA(Sec) + AMP + diphosphate + H(+). Its pathway is aminoacyl-tRNA biosynthesis; selenocysteinyl-tRNA(Sec) biosynthesis; L-seryl-tRNA(Sec) from L-serine and tRNA(Sec): step 1/1. Functionally, catalyzes the attachment of serine to tRNA(Ser). Is also able to aminoacylate tRNA(Sec) with serine, to form the misacylated tRNA L-seryl-tRNA(Sec), which will be further converted into selenocysteinyl-tRNA(Sec). The chain is Serine--tRNA ligase from Methanosarcina acetivorans (strain ATCC 35395 / DSM 2834 / JCM 12185 / C2A).